We begin with the raw amino-acid sequence, 178 residues long: Large ribosomal subunit protein uL10 (178 aa).

Belongs to the universal ribosomal protein uL10 family. As to quaternary structure, part of the ribosomal stalk of the 50S ribosomal subunit. The N-terminus interacts with L11 and the large rRNA to form the base of the stalk. The C-terminus forms an elongated spine to which L12 dimers bind in a sequential fashion forming a multimeric L10(L12)X complex.

Its function is as follows. Forms part of the ribosomal stalk, playing a central role in the interaction of the ribosome with GTP-bound translation factors. The sequence is that of Large ribosomal subunit protein uL10 from Stenotrophomonas maltophilia (strain R551-3).